Consider the following 2524-residue polypeptide: Highly reducing polyketide synthase Preu5 (2524 aa).

The 422-residue stretch at 5–426 (DTPIAIIGLS…GSNSAIVIEK (422 aa)) folds into the Ketosynthase family 3 (KS3) domain. Catalysis depends on for beta-ketoacyl synthase activity residues cysteine 175, histidine 310, and histidine 350. The tract at residues 431-470 (DELGHETNGTNGVSVSNGVNGSNGFTNGSNGTNGHAENGN) is disordered. Positions 437–464 (TNGTNGVSVSNGVNGSNGFTNGSNGTNG) are enriched in low complexity. Residues 559–882 (VFTGQGAQYA…TYLPSLVRNV (324 aa)) form a malonyl-CoA:ACP transacylase (MAT) domain region. Serine 648 functions as the For malonyltransferase activity in the catalytic mechanism. The interval 950–1084 (HELLGRRVVS…GQIEPEFADM (135 aa)) is N-terminal hotdog fold. The 315-residue stretch at 950 to 1264 (HELLGRRVVS…FRNIGSADEN (315 aa)) folds into the PKS/mFAS DH domain. The dehydratase (DH) domain stretch occupies residues 950–1266 (HELLGRRVVS…NIGSADENID (317 aa)). Histidine 982 serves as the catalytic Proton acceptor; for dehydratase activity. The tract at residues 1102–1264 (ADLLEHDIEG…FRNIGSADEN (163 aa)) is C-terminal hotdog fold. Residue aspartate 1171 is the Proton donor; for dehydratase activity of the active site. Positions 1418–1611 (SQAVGDLADN…IPGVWDSEVQ (194 aa)) are methyltransferase (CMet) domain. Positions 1825 to 2139 (GSPDSIYFRR…SGDHLGKIVV (315 aa)) are enoylreductase (ER) domain. Residues 2164–2339 (GTYLVTGGTR…HTVSIALPIV (176 aa)) form a ketoreductase (KR) domain region. Residues 2445–2522 (DPLEGLTEAL…ALATDILSQR (78 aa)) form the Carrier domain. Serine 2482 carries the post-translational modification O-(pantetheine 4'-phosphoryl)serine.

Requires pantetheine 4'-phosphate as cofactor.

Its function is as follows. Highly reducing polyketide synthase; part of a gene cluster that mediates the biosynthesis of a yet unidentified natural product. The protein is Highly reducing polyketide synthase Preu5 of Preussia isomera (Coprophilous fungus).